Reading from the N-terminus, the 447-residue chain is SLKGMISVGPWGGSGGNYWSFKANHAITEIVIHVKDNIKSISFKDASGDISGTFGGKDPRENEKGDEKKIKIHWPTEYLKSISGSYGDYNGVLVIRSLSFITNLTTYGPFGSTSGGESFSIPIADSVVVGFHGRAGYYLDALGIFVQPVPHGTISFGPWGGPAGDDAFNFKVGSWIKDIIIYADAAINSIAFKDANGHCYGKFGGQDPNDIGVEKKVEIDGNLEHLKSISGTYGNYKGFEVVTSLSFITNVTKHGPFGIASGTSFSIPIEGSLVTGFHGKSGYYLDSIGIYVKPRDVEGSISIGPWGGSGGDPWSYTANEGINQIIIYAGSNIKSVAFKDTSGLDSATFGGVNPKDTGEKNTVSINWPSEYLTSISGTYGQYKFKDVFTTITSLSFTTNLATYGPFGKASATSFSIPIHNNMVVGFHGRAGDYLDAIGIFVKPDTAV.

3 tandem repeats follow at residues 1–149, 150–295, and 296–447. The interval 1 to 447 is 3 X approximate tandem repeats; that stretch reads SLKGMISVGP…GIFVKPDTAV (447 aa). 3 consecutive Jacalin-type lectin domains span residues 5–148, 153–294, and 300–443; these read MISV…FVQP, TISF…YVKP, and SISI…FVKP.

The protein belongs to the jacalin lectin family. As to quaternary structure, homodimer. Post-translationally, the N-terminus is blocked.

Mannose/glucose specific lectin. Shows agglutinating activity against rabbit erythrocytes. The sequence is that of Mannose/glucose-specific lectin from Parkia platycephala.